The sequence spans 42 residues: Cytochrome b559 subunit beta (42 aa).

A helical transmembrane segment spans residues 17 to 33; that stretch reads WLAIHAIGIPAVFFIGS. Histidine 21 provides a ligand contact to heme.

It belongs to the PsbE/PsbF family. As to quaternary structure, heterodimer of an alpha subunit and a beta subunit. PSII is composed of 1 copy each of membrane proteins PsbA, PsbB, PsbC, PsbD, PsbE, PsbF, PsbH, PsbI, PsbJ, PsbK, PsbL, PsbM, PsbT, PsbX, PsbY, PsbZ, Psb30/Ycf12, at least 3 peripheral proteins of the oxygen-evolving complex and a large number of cofactors. It forms dimeric complexes. Heme b serves as cofactor.

The protein localises to the plastid. It localises to the cyanelle thylakoid membrane. This b-type cytochrome is tightly associated with the reaction center of photosystem II (PSII). PSII is a light-driven water:plastoquinone oxidoreductase that uses light energy to abstract electrons from H(2)O, generating O(2) and a proton gradient subsequently used for ATP formation. It consists of a core antenna complex that captures photons, and an electron transfer chain that converts photonic excitation into a charge separation. The polypeptide is Cytochrome b559 subunit beta (Cyanophora paradoxa).